Consider the following 921-residue polypeptide: MGKKQEKKTAKGRLDKFYWLAKEQGYRSRAAFKLVQLNKKFNFLEKARCCIDLCAAPGGWLQVASKFMPANSLIVGVDLVPIKPIPRTITFAEDINSYKCRDQLRQILKDWKADIVIHDGAPNVGTAWVQDAYAQSELTLQSLRLAVEFLTAGGTFVTKVFRSKDYNNLLWVFNQLFKKVEATKPSSSRNVSAEIFVVCQGYKNPARIDPKFLDPRHVFKELDPASLADQDQEAGVPLSLKGTSAGNAHANVFEPKKIRRNREGYADGDYTLFHSLDAMDFIKGQDVIGMLGSYNQISFESDESKKLLSLPDTNDEMRENCSDLKVLGKKDFRNLMNWRKEVRLALGIDLPKSKHQDLAEQTQTVEVEEMDEDDQIDDELARLNEEAARKARKERRRKNELRQKKILKMQLQMTTPMDIGMDVMDDQLGAGNGDMFEISSGERVSKKALIQQADVSDDESETIVSSQHTDDDDPETRARRLDAEMDALYDEFKQKQSERDAKFRAKQARLQDAKNDSWHGIKDDEENDEDDDEANLSDESEGGYDLVQRRKEQEETFDTDDEEDEEDERLEREATQHSKKRKRDLAAPTADSFEMDAKPPKRSLVHSLVSDADVSAQQSREASIWFDNPLFKDLELDEQDAQEALEDDQDDEDAWEEEQDDEDDAEESDSEVEGEQEVEDDDFEVVPQDQEEHAIPDEEWDLNGEDEEAGKQKRIKDHGLATAEAVALAQALVNRQITKEDLMDQGFSKHNFVDKDGLPTWFLDDEQKHYKANIPITKEAIQALRERQRALDARPIKKVAEAKARKKMRTLRRLEKAQKKAETINENEDISEKEKSNTINKLLAKSVKGAQKKKEVQLVVAKGVNRGLKGRPKGTKGRYKMVDPRMKKELRAFKRKAKRDGKKLGSSNSKPRVPKGYGPRN.

S-adenosyl-L-methionine contacts are provided by Gly58, Trp60, Asp78, Asp94, and Asp119. The active-site Proton acceptor is Lys159. The stretch at 367-414 (VEEMDEDDQIDDELARLNEEAARKARKERRRKNELRQKKILKMQLQMT) forms a coiled coil. Disordered regions lie at residues 448–476 (ALIQ…DPET), 491–604 (EFKQ…KRSL), 635–713 (ELDE…GKQK), 814–835 (LEKA…EKEK), and 866–921 (RGLK…GPRN). The segment covering 491–522 (EFKQKQSERDAKFRAKQARLQDAKNDSWHGIK) has biased composition (basic and acidic residues). Composition is skewed to acidic residues over residues 523-542 (DDEE…ESEG), 555-568 (ETFD…EEDE), 635-684 (ELDE…DDFE), and 697-708 (DEEWDLNGEDEE). Residues 796–835 (IKKVAEAKARKKMRTLRRLEKAQKKAETINENEDISEKEK) adopt a coiled-coil conformation. Over residues 814–823 (LEKAQKKAET) the composition is skewed to basic and acidic residues. Basic residues predominate over residues 868–879 (LKGRPKGTKGRY). The segment covering 880 to 892 (KMVDPRMKKELRA) has biased composition (basic and acidic residues).

The protein belongs to the class I-like SAM-binding methyltransferase superfamily. RNA methyltransferase RlmE family. SPB1 subfamily. Component of the nucleolar and nucleoplasmic pre-60S ribosomal particle.

The protein localises to the nucleus. Its subcellular location is the nucleolus. The catalysed reaction is a ribonucleotide in rRNA + S-adenosyl-L-methionine = a 2'-O-methylribonucleotide in rRNA + S-adenosyl-L-homocysteine + H(+). Functionally, required for proper assembly of pre-ribosomal particles during the biogenesis of the 60S ribosomal subunit. The polypeptide is AdoMet-dependent rRNA methyltransferase SPB1 (Mycosarcoma maydis (Corn smut fungus)).